The chain runs to 262 residues: MLARVGTTLFFLANALAAYAVSVTSPTRDTTWQSGQVNTVTWSSVSTDPEEMVIMLVNNAHYPNQNFNLGTVQSSAGSLDTDISISSDLPTDGWQIYFNGATSQNQGSLAQSEQFDFEGSDSTLAASTISGGIYSSTSASSTSSSTATPSSSSTTSSSSSSSSSTPISSSITSSISSSASSSVSSSSASSSGSISSADAKTVSASSNSTISGFSTSTTSASSSAAGNSSSSSYTSYSGAVSNGVAQLSVAACMGIAALMLIA.

Residues 1-20 (MLARVGTTLFFLANALAAYA) form the signal peptide. Disordered regions lie at residues 136-165 (STSA…SSST) and 175-194 (ISSS…SGSI). Asparagine 207 and asparagine 227 each carry an N-linked (GlcNAc...) asparagine glycan. Residue asparagine 242 is the site of GPI-like-anchor amidated asparagine attachment. The propeptide at 243-262 (GVAQLSVAACMGIAALMLIA) is removed in mature form.

Belongs to the UPF0619 family.

It is found in the golgi apparatus membrane. The protein resides in the cell membrane. The protein is UPF0619 GPI-anchored membrane protein C1322.10 of Schizosaccharomyces pombe (strain 972 / ATCC 24843) (Fission yeast).